Reading from the N-terminus, the 224-residue chain is Putative O-methyltransferase MT1258 (224 aa).

Basic and acidic residues predominate over residues 1–10 (MDGTPGHDDM). Positions 1 to 21 (MDGTPGHDDMPGQPAPSRGES) are disordered. Residues Val51, Glu73, 75–76 (GT), Ser81, Asp99, and Ile100 each bind S-adenosyl-L-methionine. Position 147 (Asp147) interacts with substrate. Residue Asp149 coordinates S-adenosyl-L-methionine.

This sequence belongs to the class I-like SAM-binding methyltransferase superfamily. Cation-dependent O-methyltransferase family.

This is Putative O-methyltransferase MT1258 from Mycobacterium tuberculosis (strain CDC 1551 / Oshkosh).